Reading from the N-terminus, the 149-residue chain is Large ribosomal subunit protein bL20m (149 aa).

The N-terminal 9 residues, Met-1–Trp-9, are a transit peptide targeting the mitochondrion.

Belongs to the bacterial ribosomal protein bL20 family. Component of the mitochondrial large ribosomal subunit (mt-LSU). Mature mammalian 55S mitochondrial ribosomes consist of a small (28S) and a large (39S) subunit. The 28S small subunit contains a 12S ribosomal RNA (12S mt-rRNA) and 30 different proteins. The 39S large subunit contains a 16S rRNA (16S mt-rRNA), a copy of mitochondrial valine transfer RNA (mt-tRNA(Val)), which plays an integral structural role, and 52 different proteins. Interacts with OXA1L.

It is found in the mitochondrion. In Homo sapiens (Human), this protein is Large ribosomal subunit protein bL20m (MRPL20).